A 101-amino-acid polypeptide reads, in one-letter code: Small ribosomal subunit protein bS6 (101 aa).

This sequence belongs to the bacterial ribosomal protein bS6 family.

Functionally, binds together with bS18 to 16S ribosomal RNA. This Staphylococcus saprophyticus subsp. saprophyticus (strain ATCC 15305 / DSM 20229 / NCIMB 8711 / NCTC 7292 / S-41) protein is Small ribosomal subunit protein bS6.